The sequence spans 122 residues: Large ribosomal subunit protein uL14 (122 aa).

The protein belongs to the universal ribosomal protein uL14 family. As to quaternary structure, part of the 50S ribosomal subunit. Forms a cluster with proteins L3 and L19. In the 70S ribosome, L14 and L19 interact and together make contacts with the 16S rRNA in bridges B5 and B8.

Its function is as follows. Binds to 23S rRNA. Forms part of two intersubunit bridges in the 70S ribosome. In Rickettsia canadensis (strain McKiel), this protein is Large ribosomal subunit protein uL14.